The sequence spans 492 residues: Aspartyl/glutamyl-tRNA(Asn/Gln) amidotransferase subunit B (492 aa).

The protein belongs to the GatB/GatE family. GatB subfamily. Heterotrimer of A, B and C subunits.

The catalysed reaction is L-glutamyl-tRNA(Gln) + L-glutamine + ATP + H2O = L-glutaminyl-tRNA(Gln) + L-glutamate + ADP + phosphate + H(+). It catalyses the reaction L-aspartyl-tRNA(Asn) + L-glutamine + ATP + H2O = L-asparaginyl-tRNA(Asn) + L-glutamate + ADP + phosphate + 2 H(+). In terms of biological role, allows the formation of correctly charged Asn-tRNA(Asn) or Gln-tRNA(Gln) through the transamidation of misacylated Asp-tRNA(Asn) or Glu-tRNA(Gln) in organisms which lack either or both of asparaginyl-tRNA or glutaminyl-tRNA synthetases. The reaction takes place in the presence of glutamine and ATP through an activated phospho-Asp-tRNA(Asn) or phospho-Glu-tRNA(Gln). The polypeptide is Aspartyl/glutamyl-tRNA(Asn/Gln) amidotransferase subunit B (Dehalococcoides mccartyi (strain CBDB1)).